We begin with the raw amino-acid sequence, 101 residues long: Small ribosomal subunit protein eS24 (101 aa).

Belongs to the eukaryotic ribosomal protein eS24 family.

This Methanosarcina barkeri (strain Fusaro / DSM 804) protein is Small ribosomal subunit protein eS24.